A 416-amino-acid polypeptide reads, in one-letter code: S-adenosylmethionine synthase (416 aa).

Histidine 16 is a binding site for ATP. Aspartate 18 is a binding site for Mg(2+). Residue glutamate 44 coordinates K(+). L-methionine is bound by residues glutamate 57 and glutamine 100. The flexible loop stretch occupies residues glutamine 100–alanine 110. Residues aspartate 175–lysine 177, lysine 251–phenylalanine 252, aspartate 260, arginine 266–lysine 267, alanine 283, and lysine 287 each bind ATP. Residue aspartate 260 coordinates L-methionine. Lysine 291 is a binding site for L-methionine.

The protein belongs to the AdoMet synthase family. In terms of assembly, homotetramer; dimer of dimers. It depends on Mg(2+) as a cofactor. Requires K(+) as cofactor.

Its subcellular location is the cytoplasm. The catalysed reaction is L-methionine + ATP + H2O = S-adenosyl-L-methionine + phosphate + diphosphate. Its pathway is amino-acid biosynthesis; S-adenosyl-L-methionine biosynthesis; S-adenosyl-L-methionine from L-methionine: step 1/1. Its function is as follows. Catalyzes the formation of S-adenosylmethionine (AdoMet) from methionine and ATP. The overall synthetic reaction is composed of two sequential steps, AdoMet formation and the subsequent tripolyphosphate hydrolysis which occurs prior to release of AdoMet from the enzyme. In Microcystis aeruginosa (strain NIES-843 / IAM M-2473), this protein is S-adenosylmethionine synthase.